We begin with the raw amino-acid sequence, 740 residues long: Ion-translocating oxidoreductase complex subunit C (740 aa).

4Fe-4S ferredoxin-type domains follow at residues 369 to 397 (GEPQ…QQLY) and 407 to 436 (KATT…VQYF). [4Fe-4S] cluster is bound by residues C377, C380, C383, C387, C416, C419, C422, and C426. The tract at residues 602 to 684 (KLEQQQANAE…EPEEQVDPRK (83 aa)) is disordered. 2 stretches are compositionally biased toward low complexity: residues 605–615 (QQQANAEPEQQ) and 637–647 (QQQANAEPEQQ).

It belongs to the 4Fe4S bacterial-type ferredoxin family. RnfC subfamily. The complex is composed of six subunits: RsxA, RsxB, RsxC, RsxD, RsxE and RsxG. The cofactor is [4Fe-4S] cluster.

The protein localises to the cell inner membrane. Part of a membrane-bound complex that couples electron transfer with translocation of ions across the membrane. Required to maintain the reduced state of SoxR. In Escherichia coli O7:K1 (strain IAI39 / ExPEC), this protein is Ion-translocating oxidoreductase complex subunit C.